We begin with the raw amino-acid sequence, 142 residues long: Cell wall-binding protein YqgA (142 aa).

Residues 1–28 form the signal peptide; it reads MKQGKFSVFLILLLMLTLVVAPKEKAEA.

In terms of assembly, found in a complex with F(1)F(0) ATP synthase and SpoIIIJ and YqjG.

It is found in the secreted. The protein localises to the cell wall. This Bacillus subtilis (strain 168) protein is Cell wall-binding protein YqgA (yqgA).